A 358-amino-acid polypeptide reads, in one-letter code: Peptide chain release factor 1 (358 aa).

Gln-234 carries the N5-methylglutamine modification.

Belongs to the prokaryotic/mitochondrial release factor family. In terms of processing, methylated by PrmC. Methylation increases the termination efficiency of RF1.

It is found in the cytoplasm. Peptide chain release factor 1 directs the termination of translation in response to the peptide chain termination codons UAG and UAA. The protein is Peptide chain release factor 1 of Akkermansia muciniphila (strain ATCC BAA-835 / DSM 22959 / JCM 33894 / BCRC 81048 / CCUG 64013 / CIP 107961 / Muc).